Reading from the N-terminus, the 564-residue chain is Oxalyl-CoA decarboxylase (564 aa).

Substrate-binding residues include Ile-32 and Tyr-118. ADP contacts are provided by Arg-158 and Lys-220. 261 to 265 (AAARS) contributes to the substrate binding site. The ADP site is built by Arg-280, Asp-302, and Ile-322. Residue Asn-355 participates in substrate binding. Thiamine diphosphate contacts are provided by residues Tyr-372 and 396 to 398 (ANT). 403 to 404 (RN) contacts substrate. 421–423 (GVM) contacts thiamine diphosphate. Position 447 (Asp-447) interacts with Mg(2+). 448 to 449 (SA) serves as a coordination point for thiamine diphosphate. Positions 474 and 476 each coordinate Mg(2+). Residue Tyr-478 participates in thiamine diphosphate binding. 550-552 (SGH) serves as a coordination point for substrate.

It belongs to the TPP enzyme family. In terms of assembly, homotetramer; dimer of dimers. Mg(2+) is required as a cofactor. Requires thiamine diphosphate as cofactor.

The enzyme catalyses oxalyl-CoA + H(+) = formyl-CoA + CO2. Its pathway is metabolic intermediate degradation; oxalate degradation; CO(2) and formate from oxalate: step 2/2. Involved in the catabolism of oxalate and in the adapatation to low pH via the induction of the oxalate-dependent acid tolerance response (ATR). Catalyzes the decarboxylation of oxalyl-CoA to yield carbon dioxide and formyl-CoA. The polypeptide is Oxalyl-CoA decarboxylase (oxc) (Escherichia coli O157:H7).